The chain runs to 631 residues: Probable glutamate--tRNA ligase, cytoplasmic (631 aa).

139-141 contacts L-glutamate; sequence RFP. The 'HIGH' region signature appears at 144 to 153; sequence PSGFLHIGHI. H149 is an ATP binding site. Residues D173, 311-315, and R329 each bind L-glutamate; that span reads YDFAC. Residues E332 and 367-371 each bind ATP; that span reads VLSKR. The 'KMSKS' region signature appears at 367 to 371; it reads VLSKR.

This sequence belongs to the class-I aminoacyl-tRNA synthetase family. Glutamate--tRNA ligase type 2 subfamily.

It is found in the cytoplasm. It carries out the reaction tRNA(Glu) + L-glutamate + ATP = L-glutamyl-tRNA(Glu) + AMP + diphosphate. The polypeptide is Probable glutamate--tRNA ligase, cytoplasmic (Enterocytozoon bieneusi (strain H348) (Microsporidian parasite)).